A 219-amino-acid chain; its full sequence is Small ribosomal subunit protein uS3 (219 aa).

Residues 38–106 (IRKFIEKRLV…RVHINIVEIK (69 aa)) form the KH type-2 domain.

The protein belongs to the universal ribosomal protein uS3 family. In terms of assembly, part of the 30S ribosomal subunit. Forms a tight complex with proteins S10 and S14.

Binds the lower part of the 30S subunit head. Binds mRNA in the 70S ribosome, positioning it for translation. The polypeptide is Small ribosomal subunit protein uS3 (Levilactobacillus brevis (strain ATCC 367 / BCRC 12310 / CIP 105137 / JCM 1170 / LMG 11437 / NCIMB 947 / NCTC 947) (Lactobacillus brevis)).